The chain runs to 347 residues: MPFLKDAVTLVKEPQQLPSIPLSWFPSSVFAAFNVTLLLFLSGLFFGFPCRWLVQNGEWAFPAITGPLFILTFFSLVSLNFSDPGILHRGSTKEDPMTVHVVRVNQRAFRLEWCPKCLFHRPPRTYHCPWCNICVEDFDHHCKWVNNCIGHRNFRLFMLLVLSLCLYSGALLVTCLTFLFRTRHLPFSLDKGMAILVAVPAAGFLIPLFLLLLIQALSVSRAESSYESKCRYHPEYNPFDQGFAKNWYLAMFAPLGPNYMSEVVCLQRPVGTAWIQEKTKPSPPRRPKHCRPGPPGPQHQPRRVPGKGPPGSGEAAALQEMRRLPASVEKSPGGPRQPTAEPAAGDP.

2 helical membrane-spanning segments follow: residues 29–49 and 59–79; these read VFAA…FGFP and WAFP…LVSL. The DHHC domain maps to 112–162; sequence EWCPKCLFHRPPRTYHCPWCNICVEDFDHHCKWVNNCIGHRNFRLFMLLVL. The active-site S-palmitoyl cysteine intermediate is the Cys-142. Transmembrane regions (helical) follow at residues 156 to 176 and 194 to 214; these read LFML…VTCL and AILV…LLLI. A disordered region spans residues 275-347; that stretch reads IQEKTKPSPP…PTAEPAAGDP (73 aa).

The protein belongs to the DHHC palmitoyltransferase family.

The protein localises to the golgi apparatus membrane. It is found in the cytoplasm. The protein resides in the perinuclear region. It catalyses the reaction L-cysteinyl-[protein] + hexadecanoyl-CoA = S-hexadecanoyl-L-cysteinyl-[protein] + CoA. In terms of biological role, palmitoyltransferase that mediates palmitoylation oproteins, such as RRAS and SQSTM1. Catalyzes palmitoylation of RRAS, leading to increased cell viability. Acts as a positive regulator of autophagy by mediating palmitoylation of SQSTM1, promoting affinity between SQSTM1 and ATG8 proteins and recruitment of ubiquitinated cargo proteins to autophagosomes. This is Palmitoyltransferase ZDHHC19 (Zdhhc19) from Mus musculus (Mouse).